The chain runs to 508 residues: Erythropoietin receptor (508 aa).

A signal peptide spans 1-24; sequence MNHLWTHLWPGVGSLCLLLAGAAW. Topologically, residues 25-250 are extracellular; that stretch reads ASLPKPLDPK…SLLTASDLDP (226 aa). C52 and C62 are disulfide-bonded. An N-linked (GlcNAc...) asparagine glycan is attached at N76. A disulfide bridge connects residues C91 and C107. A Fibronectin type-III domain is found at 148–247; it reads PPAGLLARRA…EPASLLTASD (100 aa). N-linked (GlcNAc...) asparagine glycosylation occurs at N184. A WSXWS motif motif is present at residues 233-237; it reads WSAWS. A helical membrane pass occupies residues 251-273; sequence LILTLSLILVLILLLLAVLALLS. Topologically, residues 274–508 are cytoplasmic; it reads HRRTLKQKIW…PSPPGYVACS (235 aa). A Glycyl lysine isopeptide (Lys-Gly) (interchain with G-Cter in ubiquitin) cross-link involves residue K281. Positions 282–290 match the Box 1 motif motif; sequence IWPGIPSPE. Phosphotyrosine; by JAK2 occurs at positions 368 and 426. The ITIM motif signature appears at 452-457; the sequence is IKYLYL. K453 is covalently cross-linked (Glycyl lysine isopeptide (Lys-Gly) (interchain with G-Cter in ubiquitin)). Phosphotyrosine; by JAK2 occurs at positions 454, 456, 468, 489, and 504. Residues 467-508 form a disordered region; it reads DYSSGGSQGAQGDSLNSPFLNPYENSLIPAPEPSPPGYVACS.

It belongs to the type I cytokine receptor family. Type 1 subfamily. In terms of assembly, forms homodimers on EPO stimulation. The tyrosine-phosphorylated form interacts with several SH2 domain-containing proteins including LYN, the adapter protein SH2B2, PTPN6, PTPN11, JAK2, PI3 kinases, STAT5A/B, SOCS3, CRKL. Interacts with INPP5D/SHIP1. SH2B2 binding inhibits the JAK-STAT signaling. Interacts with RHEX; this interaction occurs in a erythropoietin (EPO)-dependent manner. Interacts with ATXN2L. On EPO stimulation, phosphorylated on C-terminal tyrosine residues by JAK2. The phosphotyrosine motifs are also recruitment sites for several SH2-containing proteins and adapter proteins which mediate cell proliferation. Phosphorylation on Tyr-454 is required for PTPN6 interaction, Tyr-426 for PTPN11. Tyr-426 is also required for SOCS3 binding, but Tyr-454/Tyr-456 motif is the preferred binding site. In terms of processing, ubiquitinated by the ECS(SOCS2) complex following ligand-binding and phosphorylation by JAK2, leading to its degradation by the proteasome. Regulation by the ECS(SOCS2) complex acts as a negative feedback loop of erythropoietin-mediated signaling pathway. Ubiquitination at Lys-281 mediates receptor internalization, whereas ubiquitination at Lys-453 promotes trafficking of activated receptors to the lysosomes for degradation. Ubiquitinated by NOSIP; appears to be either multi-monoubiquitinated or polyubiquitinated. Ubiquitination mediates proliferation and survival of EPO-dependent cells.

Its subcellular location is the cell membrane. Its function is as follows. Receptor for erythropoietin, which mediates erythropoietin-induced erythroblast proliferation and differentiation. Upon EPO stimulation, EPOR dimerizes triggering the JAK2/STAT5 signaling cascade. In some cell types, can also activate STAT1 and STAT3. May also activate the LYN tyrosine kinase. Functionally, isoform EPOR-T acts as a dominant-negative receptor of EPOR-mediated signaling. The chain is Erythropoietin receptor (EPOR) from Canis lupus familiaris (Dog).